The sequence spans 472 residues: Adenosylhomocysteinase (472 aa).

Residues threonine 62, aspartate 137, and glutamate 197 each coordinate substrate. Threonine 198–threonine 200 is an NAD(+) binding site. Residues lysine 227 and aspartate 231 each coordinate substrate. NAD(+) is bound by residues asparagine 232, glycine 261–glycine 266, glutamate 284, asparagine 319, isoleucine 340–histidine 342, and asparagine 385.

This sequence belongs to the adenosylhomocysteinase family. The cofactor is NAD(+).

The protein localises to the cytoplasm. The catalysed reaction is S-adenosyl-L-homocysteine + H2O = L-homocysteine + adenosine. It functions in the pathway amino-acid biosynthesis; L-homocysteine biosynthesis; L-homocysteine from S-adenosyl-L-homocysteine: step 1/1. In terms of biological role, may play a key role in the regulation of the intracellular concentration of adenosylhomocysteine. The polypeptide is Adenosylhomocysteinase (Bordetella bronchiseptica (strain ATCC BAA-588 / NCTC 13252 / RB50) (Alcaligenes bronchisepticus)).